The following is a 927-amino-acid chain: Bifunctional glutamine synthetase adenylyltransferase/adenylyl-removing enzyme (927 aa).

Residues 1–428 (MTMTDASDLL…AQFDQVFADK (428 aa)) form an adenylyl removase region. An adenylyl transferase region spans residues 438–927 (DQAAGCIWSG…AALWARVFGA (490 aa)).

The protein belongs to the GlnE family. Mg(2+) is required as a cofactor.

It carries out the reaction [glutamine synthetase]-O(4)-(5'-adenylyl)-L-tyrosine + phosphate = [glutamine synthetase]-L-tyrosine + ADP. It catalyses the reaction [glutamine synthetase]-L-tyrosine + ATP = [glutamine synthetase]-O(4)-(5'-adenylyl)-L-tyrosine + diphosphate. Involved in the regulation of glutamine synthetase GlnA, a key enzyme in the process to assimilate ammonia. When cellular nitrogen levels are high, the C-terminal adenylyl transferase (AT) inactivates GlnA by covalent transfer of an adenylyl group from ATP to specific tyrosine residue of GlnA, thus reducing its activity. Conversely, when nitrogen levels are low, the N-terminal adenylyl removase (AR) activates GlnA by removing the adenylyl group by phosphorolysis, increasing its activity. The regulatory region of GlnE binds the signal transduction protein PII (GlnB) which indicates the nitrogen status of the cell. The polypeptide is Bifunctional glutamine synthetase adenylyltransferase/adenylyl-removing enzyme (Burkholderia pseudomallei (strain K96243)).